The following is a 748-amino-acid chain: Semaphorin-3B (748 aa).

A signal peptide spans 1-25 (MGRAEAAAMIPGLALLWVAGLGDTA). A Sema domain is found at 30–512 (RLRLSFQELQ…SRSAVAQIAL (483 aa)). A glycan (N-linked (GlcNAc...) asparagine) is linked at Asn82. Cys102 and Cys113 are oxidised to a cystine. A glycan (N-linked (GlcNAc...) asparagine) is linked at Asn124. Disulfide bonds link Cys131-Cys140, Cys268-Cys379, Cys292-Cys339, Cys515-Cys533, and Cys643-Cys709. One can recognise an Ig-like C2-type domain in the interval 561-659 (PSTLCSGDSS…FSQPLRRLVL (99 aa)). The interval 708-748 (MCRPQPGHHSVAADSRRKGRNRRMHVSELRAERGPRSAAHW) is disordered. Residues 732 to 742 (HVSELRAERGP) show a composition bias toward basic and acidic residues.

The protein belongs to the semaphorin family.

It localises to the secreted. In terms of biological role, inhibits axonal extension by providing local signals to specify territories inaccessible for growing axons. The polypeptide is Semaphorin-3B (Sema3b) (Mus musculus (Mouse)).